Reading from the N-terminus, the 96-residue chain is Beta-defensin 132 (96 aa).

The signal sequence occupies residues 1–22; it reads MKFLLLVLAALRFLTQVIPASG. Intrachain disulfides connect Cys-27/Cys-55, Cys-35/Cys-49, and Cys-39/Cys-56. The disordered stretch occupies residues 74-96; it reads HWQSRRRNTQRKDKKQQTTVTSS. Residues 76–87 show a composition bias toward basic residues; that stretch reads QSRRRNTQRKDK.

It belongs to the beta-defensin family.

Its subcellular location is the secreted. Its function is as follows. Has antibacterial activity. The polypeptide is Beta-defensin 132 (DEFB132) (Hylobates lar (Lar gibbon)).